An 84-amino-acid chain; its full sequence is Beta-cardiotoxin CTX27 (84 aa).

An N-terminal signal peptide occupies residues 1–21; sequence MKTLLLTLVVVTIVCLDLGYT. Cystine bridges form between cysteine 24–cysteine 43, cysteine 36–cysteine 61, cysteine 65–cysteine 76, and cysteine 77–cysteine 82.

It belongs to the three-finger toxin family. Short-chain subfamily. Aminergic toxin sub-subfamily. In terms of tissue distribution, expressed by the venom gland.

It is found in the secreted. Its function is as follows. Acts as a beta-blocker by binding to beta-1 and beta-2 adrenergic receptors (ADRB1 and ADRB2). It dose-dependently decreases the heart rate (bradycardia), whereas conventional cardiotoxins increases it. At 100 mg/kg, intraperitoneal injection into mice provokes labored breathing, impaired locomotion, lack of response to external stimuli, and death (after 30 minutes). This Ophiophagus hannah (King cobra) protein is Beta-cardiotoxin CTX27.